The primary structure comprises 143 residues: Transcription antitermination protein NusB (143 aa).

This sequence belongs to the NusB family.

Functionally, involved in transcription antitermination. Required for transcription of ribosomal RNA (rRNA) genes. Binds specifically to the boxA antiterminator sequence of the ribosomal RNA (rrn) operons. In Anaeromyxobacter sp. (strain Fw109-5), this protein is Transcription antitermination protein NusB.